A 302-amino-acid polypeptide reads, in one-letter code: Nuclear egress protein 1 (302 aa).

Over residues 1–17 the composition is skewed to polar residues; the sequence is MPKSVSSHISLATSTGR. The segment at 1–22 is disordered; it reads MPKSVSSHISLATSTGRSGPRD. A CCCH-type zinc finger spans residues 102-227; that stretch reads CVSLSPFGHS…CILFKTRALH (126 aa).

This sequence belongs to the herpesviridae NEC1 protein family. As to quaternary structure, forms a heterohexameric complex with NEC2. Interacts with capsid vertex specific component 2/CVC2; this interaction directs the capsid to the host inner nuclear membrane to initiate budding. Phosphorylated at serine residues in the N-terminus. This phosphorylation regulates the localization within the inner nuclear membrane.

The protein resides in the host nucleus inner membrane. Its function is as follows. Plays an essential role in virion nuclear egress, the first step of virion release from infected cell. Within the host nucleus, NEC1 interacts with the newly formed capsid through the vertexes and directs it to the inner nuclear membrane by associating with NEC2. Induces the budding of the capsid at the inner nuclear membrane as well as its envelopment into the perinuclear space. There, the NEC1/NEC2 complex promotes the fusion of the enveloped capsid with the outer nuclear membrane and the subsequent release of the viral capsid into the cytoplasm where it will reach the secondary budding sites in the host Golgi or trans-Golgi network. The chain is Nuclear egress protein 1 from Homo sapiens (Human).